Consider the following 697-residue polypeptide: Exocyst complex component 7 (697 aa).

The interval 1–384 (MIPPQEASAR…FSTVLTVFPI (384 aa)) is SEC8 and ARHQ binding. 2 coiled-coil regions span residues 5–42 (QEAS…TRNM) and 63–85 (VHKQ…SCLD). S133 carries the post-translational modification Phosphoserine. Residues 238–270 (FRKSSSSSGVPYSPAIPNKRKDTPTKKPIKRPG) form a disordered region.

It belongs to the EXO70 family. The exocyst complex is composed of EXOC1, EXOC2, EXOC3, EXOC4, EXOC5, EXOC6, EXOC7 and EXOC8. Interacts with RAB11FIP3. Interacts with ARHQ in a GTP-dependent manner.

The protein localises to the cytoplasm. The protein resides in the cytosol. It is found in the cell membrane. Its subcellular location is the midbody. It localises to the midbody ring. Component of the exocyst complex involved in the docking of exocytic vesicles with fusion sites on the plasma membrane. In adipocytes, plays a crucial role in targeting SLC2A4 vesicle to the plasma membrane in response to insulin, perhaps directing the vesicle to the precise site of fusion. It is required for neuron survival and plays an essential role in cortical development. The chain is Exocyst complex component 7 (Exoc7) from Mus musculus (Mouse).